The primary structure comprises 601 residues: Leucine zipper putative tumor suppressor 1 (601 aa).

The N-myristoyl glycine moiety is linked to residue G2. The disordered stretch occupies residues 135 to 190 (GAILHSSPESTNHQLHPMPPDKPKEQELKPGLCSGALSDSGRNSMSSLPTHSTTSS). A compositionally biased stretch (basic and acidic residues) spans 153–162 (PPDKPKEQEL). The segment covering 174-190 (SGRNSMSSLPTHSTTSS) has biased composition (polar residues). Residues 255 to 573 (PLSTDECTIQ…RLEKALQQLA (319 aa)) are a coiled coil.

The protein belongs to the LZTS family. As to quaternary structure, binds EEF1G, TLK2 and CDK1. In terms of processing, phosphorylated on serine residues. Hyperphosphorylated by the cAMP-dependent kinase PKA during cell-cycle progression. Highly expressed in brain, in particular in cortex, the CA2 region of the hippocampus, olfactory bulb, striatum and pons. Not detectable in the other tissues tested.

It localises to the cytoplasm. The protein resides in the cell membrane. The protein localises to the cell projection. It is found in the dendritic spine. Its subcellular location is the postsynaptic density. It localises to the synapse. Its function is as follows. Involved in the regulation of cell growth. May stabilize the active CDC2-cyclin B1 complex and thereby contribute to the regulation of the cell cycle and the prevention of uncontrolled cell proliferation. May act as tumor suppressor. The protein is Leucine zipper putative tumor suppressor 1 (Lzts1) of Rattus norvegicus (Rat).